We begin with the raw amino-acid sequence, 104 residues long: UPF0213 protein VIBHAR_05350 (104 aa).

A GIY-YIG domain is found at 7-82; the sequence is QRWSVYLIRN…KQLTKTKKEL (76 aa).

Belongs to the UPF0213 family.

The chain is UPF0213 protein VIBHAR_05350 from Vibrio campbellii (strain ATCC BAA-1116).